A 200-amino-acid chain; its full sequence is TATA-box-binding protein (200 aa).

A run of 2 repeats spans residues 25 to 101 (LQNI…ARII) and 115 to 192 (IQNI…YPVL).

Belongs to the TBP family. Belongs to the TFIID complex together with the TBP-associated factors (TAFs). Binds DNA as monomer.

It localises to the nucleus. Functionally, general transcription factor that functions at the core of the DNA-binding multiprotein factor TFIID. Binding of TFIID to the TATA box is the initial transcriptional step of the pre-initiation complex (PIC), playing a role in the activation of eukaryotic genes transcribed by RNA polymerase II. The polypeptide is TATA-box-binding protein (Nicotiana tabacum (Common tobacco)).